Here is a 353-residue protein sequence, read N- to C-terminus: N-methyltransferase (353 aa).

Residues S171, A195, D218, D238, and K252 each coordinate S-adenosyl-L-homocysteine. S-adenosyl-L-methionine is bound at residue D218.

This sequence belongs to the class I-like SAM-binding methyltransferase superfamily. Cation-independent O-methyltransferase family. In terms of assembly, homodimer. In terms of tissue distribution, expressed at high levels in all tissues.

It carries out the reaction 3-methoxytyramine + S-adenosyl-L-methionine = N-methyl-3-methoxytyramine + S-adenosyl-L-homocysteine + H(+). The catalysed reaction is mescaline + S-adenosyl-L-methionine = N-methylmescaline + S-adenosyl-L-homocysteine + H(+). It catalyses the reaction tyramine + S-adenosyl-L-methionine = N-methyltyramine + S-adenosyl-L-homocysteine + H(+). The enzyme catalyses 4-hydroxy-3,5-dimethoxyphenethylamine + S-adenosyl-L-methionine = N-methyl-4-hydroxy-3,5-dimethoxyphenethylamine + S-adenosyl-L-homocysteine + H(+). The protein operates within aromatic compound metabolism. It participates in alkaloid biosynthesis. In terms of biological role, N-methyltransferase participating in the biosynthesis of natural products derived from phenylethylamine, including mescaline, a natural hallucinogen potentially used in psychotherapeutic treatments. Catalyzes the N-methylation of many substrates, including 3-methoxytyramine, 5-hydroxy-3,4-dimethoxyphenethylamine, 4-hydroxy-3,5-dimethoxyphenethylamine, tyramine and mescaline. This chain is N-methyltransferase, found in Lophophora williamsii (Peyote).